The chain runs to 304 residues: Uricase (304 aa).

An N-acetylalanine modification is found at A2. An N6-acetyllysine; alternate mark is found at K10 and K23. 2 positions are modified to N6-succinyllysine; alternate: K10 and K23. The Charge relay system role is filled by K23. N6-acetyllysine is present on residues K27 and K36. Phosphoserine occurs at positions 39 and 63. T68 acts as the Charge relay system in catalysis. T68 and D69 together coordinate urate. K118, K122, and K164 each carry N6-acetyllysine. F170 provides a ligand contact to urate. K175 and K185 each carry N6-acetyllysine. R187 is a binding site for urate. K221 and K228 each carry N6-acetyllysine; alternate. N6-succinyllysine; alternate occurs at positions 221 and 228. S232 is subject to Phosphoserine. 3 residues coordinate urate: V235, Q236, and N262. The Charge relay system role is filled by H264. At K278 the chain carries N6-acetyllysine. Y289 bears the Phosphotyrosine mark. Residues 302–304 (SRL) carry the Microbody targeting signal motif.

It belongs to the uricase family. Homotetramer.

The protein resides in the peroxisome. The enzyme catalyses urate + O2 + H2O = 5-hydroxyisourate + H2O2. The protein operates within purine metabolism; urate degradation; (S)-allantoin from urate: step 1/3. Functionally, catalyzes the oxidation of uric acid to 5-hydroxyisourate, which is further processed to form (S)-allantoin. This Bos taurus (Bovine) protein is Uricase (UOX).